Here is a 470-residue protein sequence, read N- to C-terminus: MVDQVKVVADDQAPAEQSLRRNLTNRHIQLIAIGGAIGTGLFMGSGKTISLAGPSIIFVYMIIGFMLFFVMRAMGELLLSNLEYKSFSDFASDLLGPWAGYFTGWTYWFCWVVTGMADVVAITAYAQFWFPDLSDWVASLAVIVLLLTLNLATVKMFGEMEFWFAMIKIVAIVSLIVVGLVMVAMHFQSPTGVEASFAHLWNDGGWFPKGLSGFFAGFQIAVFAFVGIELVGTTAAETKDPEKSLPRAINSIPIRIIMFYVFALIVIMSVTPWSSVVPEKSPFVELFVLVGLPAAASVINFVVLTSAASSANSGVFSTSRMLFGLAQEGVAPKAFAKLSKRAVPAKGLTFSCICLLGGVVMLYVNPSVIGAFTMITTVSAILFMFVWTIILCSYLVYRKQRPHLHEKSIYKMPLGKLMCWVCMAFFVFVVVLLTLEDDTRQALLVTPLWFIALGLGWLFIGKKRAAELRK.

12 helical membrane passes run 30 to 50 (LIAI…KTIS), 51 to 71 (LAGP…FFVM), 102 to 122 (FTGW…VVAI), 137 to 157 (VASL…VKMF), 162 to 182 (FWFA…GLVM), 211 to 231 (LSGF…IELV), 256 to 276 (IIMF…WSSV), 283 to 303 (FVEL…NFVV), 350 to 370 (FSCI…SVIG), 371 to 391 (AFTM…TIIL), 413 to 433 (PLGK…VVLL), and 441 to 461 (QALL…LFIG).

This sequence belongs to the amino acid-polyamine-organocation (APC) superfamily. Amino acid transporter (AAT) (TC 2.A.3.1) family.

It localises to the cell inner membrane. It catalyses the reaction D-alanine(in) + H(+)(in) = D-alanine(out) + H(+)(out). The enzyme catalyses D-serine(out) + H(+)(out) = D-serine(in) + H(+)(in). The catalysed reaction is glycine(in) + H(+)(in) = glycine(out) + H(+)(out). Functionally, permease that is involved in the transport across the cytoplasmic membrane of D-alanine, D-serine and glycine. The chain is D-serine/D-alanine/glycine transporter (cycA) from Escherichia coli O157:H7.